We begin with the raw amino-acid sequence, 225 residues long: Protein-L-isoaspartate O-methyltransferase (225 aa).

Serine 75 is a catalytic residue.

This sequence belongs to the methyltransferase superfamily. L-isoaspartyl/D-aspartyl protein methyltransferase family.

The protein resides in the cytoplasm. The enzyme catalyses [protein]-L-isoaspartate + S-adenosyl-L-methionine = [protein]-L-isoaspartate alpha-methyl ester + S-adenosyl-L-homocysteine. Catalyzes the methyl esterification of L-isoaspartyl residues in peptides and proteins that result from spontaneous decomposition of normal L-aspartyl and L-asparaginyl residues. It plays a role in the repair and/or degradation of damaged proteins. This is Protein-L-isoaspartate O-methyltransferase from Xanthomonas oryzae pv. oryzae (strain PXO99A).